A 238-amino-acid chain; its full sequence is Probable RNA/DNA demethylase ALKBH6 (238 aa).

The Fe2OG dioxygenase domain occupies 96-227 (PANHVLVNQY…RVSLTIRRVP (132 aa)). Asn103 and Tyr105 together coordinate 2-oxoglutarate. Fe cation contacts are provided by His114, Asp116, and His182. 2-oxoglutarate is bound by residues Arg218 and Ser220.

It belongs to the alkB family. As to quaternary structure, interacts with VCPKMT. Fe(2+) is required as a cofactor.

It localises to the cytoplasm. The protein localises to the nucleus. Its function is as follows. Probable Fe(2+)/2-oxoglutarate-dependent dioxygenase involved in oxidative demethylation of nucleic acids. Binds nucleic acids with a preference for ssDNA or ssRNA to other types of DNAs. May play a role in nucleic acid damage repair. In Mus musculus (Mouse), this protein is Probable RNA/DNA demethylase ALKBH6 (Alkbh6).